The following is a 1019-amino-acid chain: Photoactivated adenylate cyclase subunit alpha-like protein ST- (1019 aa).

Positions 55-148 (LRRLMYLSAS…GRMYGEWHMK (94 aa)) constitute a BLUF 1 domain. A Guanylate cyclase 1 domain is found at 204–332 (VLTFIYLVEF…DCINTASRIT (129 aa)). The BLUF 2 domain occupies 467 to 559 (LITLTYISQA…RVYGTPLDMT (93 aa)). The Guanylate cyclase 2 domain maps to 615–744 (VMLATDICSF…EVSARVMAVE (130 aa)). Disordered stretches follow at residues 801-846 (EDHL…TRPH), 887-923 (QIAA…DQPA), and 963-993 (EGHR…NRAT). The span at 821-834 (RHQRPGPGRPRRGH) shows a compositional bias: basic residues.

The protein belongs to the adenylyl cyclase class-4/guanylyl cyclase family. As to quaternary structure, heterotetramer of two alpha and two beta subunits.

It is found in the cell projection. Its subcellular location is the cilium. The protein resides in the flagellum. The polypeptide is Photoactivated adenylate cyclase subunit alpha-like protein ST- (Euglena gracilis).